A 122-amino-acid polypeptide reads, in one-letter code: Large ribosomal subunit protein uL14 (122 aa).

The protein belongs to the universal ribosomal protein uL14 family. Part of the 50S ribosomal subunit. Forms a cluster with proteins L3 and L19. In the 70S ribosome, L14 and L19 interact and together make contacts with the 16S rRNA in bridges B5 and B8.

Binds to 23S rRNA. Forms part of two intersubunit bridges in the 70S ribosome. In Ralstonia nicotianae (strain ATCC BAA-1114 / GMI1000) (Ralstonia solanacearum), this protein is Large ribosomal subunit protein uL14.